The primary structure comprises 415 residues: Serine hydroxymethyltransferase (415 aa).

Residues leucine 117 and 121 to 123 (GHL) each bind (6S)-5,6,7,8-tetrahydrofolate. An N6-(pyridoxal phosphate)lysine modification is found at lysine 226. (6S)-5,6,7,8-tetrahydrofolate-binding positions include glutamate 241 and 349–351 (SPF).

The protein belongs to the SHMT family. As to quaternary structure, homodimer. Requires pyridoxal 5'-phosphate as cofactor.

It is found in the cytoplasm. The enzyme catalyses (6R)-5,10-methylene-5,6,7,8-tetrahydrofolate + glycine + H2O = (6S)-5,6,7,8-tetrahydrofolate + L-serine. The protein operates within one-carbon metabolism; tetrahydrofolate interconversion. Its pathway is amino-acid biosynthesis; glycine biosynthesis; glycine from L-serine: step 1/1. In terms of biological role, catalyzes the reversible interconversion of serine and glycine with tetrahydrofolate (THF) serving as the one-carbon carrier. This reaction serves as the major source of one-carbon groups required for the biosynthesis of purines, thymidylate, methionine, and other important biomolecules. Also exhibits THF-independent aldolase activity toward beta-hydroxyamino acids, producing glycine and aldehydes, via a retro-aldol mechanism. This chain is Serine hydroxymethyltransferase, found in Geobacter metallireducens (strain ATCC 53774 / DSM 7210 / GS-15).